Reading from the N-terminus, the 541-residue chain is MTRDTNSNVGRRSVLKAASALGAFLGLGGVASATPGREPGPKKDEIIVGVSERVSSTEATVESKIPTNAEIVHTNETLGYVAVKFPSNAAEQARENFKRNVLQEDDIEYAEDNATYETLEVPNDPMYGQQYAPQQVNCEGAWAETYGDDDVVISVVDQGIQYDHENLAENMDGSVSDYGYDFVDDDGDPYPVSAGENHGTHVGGIAAGGTNNDTGHAGISNCSMLSARALGDGGGGSLSDIADAIQWSADQGADIINMSLGGGGFSETLDNACQYAYDEGTLLVAAAGNDHGGSVSYPAAYDSVMAVSSLDEGETLSSFSNVGPEIELAAPGGNVLSAVNWDDYDSLSGTSMASPVAAGVAGLALSAHPGLSNDELRDHLHDTAVDIGLSDDEQGYGRVDAELAVTTDPDNGDDDDDDDDDEDDPGDGECGDETNTATADGELSGGWGGNPSDTYSYELSTDNPCHATVTLDGPSSGATFDLFLTLDGRTPTTSDYDRRSYNWGADEEIEVDLDGDEELGILVDRYDGSGSYTLTIEELGS.

The tat-type signal signal peptide spans 1–33; it reads MTRDTNSNVGRRSVLKAASALGAFLGLGGVASA. Positions 34–121 are excised as a propeptide; the sequence is TPGREPGPKK…DNATYETLEV (88 aa). The region spanning 130 to 405 is the Peptidase S8 domain; that stretch reads QYAPQQVNCE…YGRVDAELAV (276 aa). Catalysis depends on charge relay system residues aspartate 157, histidine 198, and serine 351. The interval 403-453 is disordered; the sequence is LAVTTDPDNGDDDDDDDDDEDDPGDGECGDETNTATADGELSGGWGGNPSD. The span at 410 to 432 shows a compositional bias: acidic residues; the sequence is DNGDDDDDDDDDEDDPGDGECGD.

Belongs to the peptidase S8 family. As to quaternary structure, monomer. Post-translationally, exported by the Tat system. The position of the signal peptide cleavage has not been experimentally proven. After transport across the membrane, the propeptide is probably processed autocatalytically, yielding the mature fully active protease.

Its subcellular location is the secreted. With respect to regulation, dependent on high salt concentrations for activity and stability. Strongly inhibited by the serine protease inhibitors diisopropyl fluorophosphate (DFP), phenylmethyl sulfonylfluoride (PMSF) and chymostatin. Also inhibited by denaturing agents such as SDS, urea, and HCl guanidinium. Activated by thiol-containing reducing agents such as dithiotreitol (DTT) and 2-mercaptoethanol. In terms of biological role, serine protease that hydrolyzes large proteins such as casein and gelatin. Cleaves preferentially at the carboxyl terminus of Phe, Tyr or Leu. Is also able to catalyze peptide synthesis under different salt concentrations in the presence of dimethyl sulfoxide (DMSO). This Natrialba magadii protein is Halolysin-like extracellular serine protease Nep.